The primary structure comprises 216 residues: 3-isopropylmalate dehydratase small subunit (216 aa).

The protein belongs to the LeuD family. LeuD type 1 subfamily. As to quaternary structure, heterodimer of LeuC and LeuD.

It catalyses the reaction (2R,3S)-3-isopropylmalate = (2S)-2-isopropylmalate. Its pathway is amino-acid biosynthesis; L-leucine biosynthesis; L-leucine from 3-methyl-2-oxobutanoate: step 2/4. In terms of biological role, catalyzes the isomerization between 2-isopropylmalate and 3-isopropylmalate, via the formation of 2-isopropylmaleate. The protein is 3-isopropylmalate dehydratase small subunit of Psychrobacter arcticus (strain DSM 17307 / VKM B-2377 / 273-4).